Reading from the N-terminus, the 41-residue chain is U-AITX-Bg1a (41 aa).

3 disulfide bridges follow: Cys2-Cys35, Cys4-Cys28, and Cys18-Cys36.

Belongs to the sea anemone type 3 (BDS) potassium channel toxin family.

It localises to the secreted. The protein resides in the nematocyst. In terms of biological role, potently and selectively inhibits voltage-gated potassium channels Kv11/KCNH/ERG. Acts as a gating-modifier toxin that shifts the voltage-dependence of ERG activation in the positive direction and suppresses its current amplitudes elicited by strong depolarizing pulses that maximally activate the channels. In Bunodosoma granuliferum (Red warty sea anemone), this protein is U-AITX-Bg1a.